The primary structure comprises 407 residues: Bifunctional enzyme IspD/IspF (407 aa).

Residues 1–246 form a 2-C-methyl-D-erythritol 4-phosphate cytidylyltransferase region; that stretch reads MQPLAEATTI…RQDHVSFPDI (246 aa). Residues 247 to 407 form a 2-C-methyl-D-erythritol 2,4-cyclodiphosphate synthase region; sequence RTGNGYDVHS…TVIYPGEVPE (161 aa). A divalent metal cation is bound by residues Asp-253 and His-255. 4-CDP-2-C-methyl-D-erythritol 2-phosphate contacts are provided by residues 253 to 255 and 279 to 280; these read DVH and HS. A divalent metal cation is bound at residue His-287. Residues 301–303, 377–380, Phe-384, and Arg-387 contribute to the 4-CDP-2-C-methyl-D-erythritol 2-phosphate site; these read DIG and TTNE.

The protein in the N-terminal section; belongs to the IspD/TarI cytidylyltransferase family. IspD subfamily. This sequence in the C-terminal section; belongs to the IspF family. The cofactor is a divalent metal cation.

It catalyses the reaction 2-C-methyl-D-erythritol 4-phosphate + CTP + H(+) = 4-CDP-2-C-methyl-D-erythritol + diphosphate. The catalysed reaction is 4-CDP-2-C-methyl-D-erythritol 2-phosphate = 2-C-methyl-D-erythritol 2,4-cyclic diphosphate + CMP. Its pathway is isoprenoid biosynthesis; isopentenyl diphosphate biosynthesis via DXP pathway; isopentenyl diphosphate from 1-deoxy-D-xylulose 5-phosphate: step 2/6. It functions in the pathway isoprenoid biosynthesis; isopentenyl diphosphate biosynthesis via DXP pathway; isopentenyl diphosphate from 1-deoxy-D-xylulose 5-phosphate: step 4/6. Bifunctional enzyme that catalyzes the formation of 4-diphosphocytidyl-2-C-methyl-D-erythritol from CTP and 2-C-methyl-D-erythritol 4-phosphate (MEP) (IspD), and catalyzes the conversion of 4-diphosphocytidyl-2-C-methyl-D-erythritol 2-phosphate (CDP-ME2P) to 2-C-methyl-D-erythritol 2,4-cyclodiphosphate (ME-CPP) with a corresponding release of cytidine 5-monophosphate (CMP) (IspF). This chain is Bifunctional enzyme IspD/IspF, found in Brucella anthropi (strain ATCC 49188 / DSM 6882 / CCUG 24695 / JCM 21032 / LMG 3331 / NBRC 15819 / NCTC 12168 / Alc 37) (Ochrobactrum anthropi).